The primary structure comprises 1377 residues: DNA-directed RNA polymerase subunit beta'' (1377 aa).

Zn(2+) contacts are provided by Cys-224, Cys-294, Cys-301, and Cys-304.

It belongs to the RNA polymerase beta' chain family. RpoC2 subfamily. In terms of assembly, in plastids the minimal PEP RNA polymerase catalytic core is composed of four subunits: alpha, beta, beta', and beta''. When a (nuclear-encoded) sigma factor is associated with the core the holoenzyme is formed, which can initiate transcription. It depends on Zn(2+) as a cofactor.

The protein resides in the plastid. It is found in the chloroplast. The catalysed reaction is RNA(n) + a ribonucleoside 5'-triphosphate = RNA(n+1) + diphosphate. DNA-dependent RNA polymerase catalyzes the transcription of DNA into RNA using the four ribonucleoside triphosphates as substrates. The polypeptide is DNA-directed RNA polymerase subunit beta'' (Calycanthus floridus var. glaucus (Eastern sweetshrub)).